The primary structure comprises 272 residues: Ethanolamine ammonia-lyase small subunit (272 aa).

3 residues coordinate adenosylcob(III)alamin: V161, E182, and C211.

This sequence belongs to the EutC family. As to quaternary structure, the basic unit is a heterodimer which dimerizes to form tetramers. The heterotetramers trimerize; 6 large subunits form a core ring with 6 small subunits projecting outwards. It depends on adenosylcob(III)alamin as a cofactor.

It localises to the bacterial microcompartment. The catalysed reaction is ethanolamine = acetaldehyde + NH4(+). It participates in amine and polyamine degradation; ethanolamine degradation. Its function is as follows. Catalyzes the deamination of various vicinal amino-alcohols to oxo compounds. Allows this organism to utilize ethanolamine as the sole source of nitrogen and carbon in the presence of external vitamin B12. This chain is Ethanolamine ammonia-lyase small subunit, found in Pseudomonas putida (strain GB-1).